A 333-amino-acid polypeptide reads, in one-letter code: Ribosomal RNA small subunit methyltransferase C (333 aa).

The protein belongs to the methyltransferase superfamily. RsmC family. Monomer.

Its subcellular location is the cytoplasm. The catalysed reaction is guanosine(1207) in 16S rRNA + S-adenosyl-L-methionine = N(2)-methylguanosine(1207) in 16S rRNA + S-adenosyl-L-homocysteine + H(+). Its function is as follows. Specifically methylates the guanine in position 1207 of 16S rRNA in the 30S particle. This chain is Ribosomal RNA small subunit methyltransferase C, found in Mannheimia succiniciproducens (strain KCTC 0769BP / MBEL55E).